The chain runs to 188 residues: Large ribosomal subunit protein bL35m (188 aa).

The protein belongs to the bacterial ribosomal protein bL35 family.

It localises to the mitochondrion. This is Large ribosomal subunit protein bL35m (MRPL35) from Bos taurus (Bovine).